Reading from the N-terminus, the 185-residue chain is HTH-type transcriptional regulator PuuR (185 aa).

Residues 1-20 (MSDEGLAPGKRLSEIRQQQG) are disordered. Positions 12-66 (LSEIRQQQGLSQRRAAELSGLTHSAISTIEQDKVSPAISTLQKLLKVYGLSLSEF) constitute an HTH cro/C1-type domain. Residues 23 to 42 (QRRAAELSGLTHSAISTIEQ) constitute a DNA-binding region (H-T-H motif). Positions 111–178 (FETYQPGTTT…TSAGICRIIS (68 aa)) constitute a Cupin type-2 domain.

The protein operates within amine and polyamine degradation; putrescine degradation [regulation]. Functionally, represses puuA, puuD and puuP. This Escherichia coli (strain K12) protein is HTH-type transcriptional regulator PuuR (puuR).